The sequence spans 145 residues: Large ribosomal subunit protein uL13 (145 aa).

The protein belongs to the universal ribosomal protein uL13 family. As to quaternary structure, part of the 50S ribosomal subunit.

In terms of biological role, this protein is one of the early assembly proteins of the 50S ribosomal subunit, although it is not seen to bind rRNA by itself. It is important during the early stages of 50S assembly. This chain is Large ribosomal subunit protein uL13, found in Staphylococcus saprophyticus subsp. saprophyticus (strain ATCC 15305 / DSM 20229 / NCIMB 8711 / NCTC 7292 / S-41).